The sequence spans 161 residues: Leucine-rich colipase-like protein 1 (161 aa).

A signal peptide spans 1 to 25; the sequence is MSVSVWPPLLLLLLLLLLWAVPTFQ.

The chain is Leucine-rich colipase-like protein 1 (Lrcol1) from Mus musculus (Mouse).